Consider the following 501-residue polypeptide: L-arabinose isomerase (501 aa).

Mn(2+)-binding residues include E306, E333, H350, and H450.

The protein belongs to the arabinose isomerase family. As to quaternary structure, homohexamer. It depends on Mn(2+) as a cofactor.

The enzyme catalyses beta-L-arabinopyranose = L-ribulose. The protein operates within carbohydrate degradation; L-arabinose degradation via L-ribulose; D-xylulose 5-phosphate from L-arabinose (bacterial route): step 1/3. Functionally, catalyzes the conversion of L-arabinose to L-ribulose. The chain is L-arabinose isomerase from Erwinia tasmaniensis (strain DSM 17950 / CFBP 7177 / CIP 109463 / NCPPB 4357 / Et1/99).